The following is a 204-amino-acid chain: Serotonin N-acetyltransferase (204 aa).

Threonine 28 is subject to Phosphothreonine; by PKA. In terms of domain architecture, N-acetyltransferase spans 32-193 (SEFRCLTPED…SFTELHCSLQ (162 aa)). Leucine 121 contributes to the substrate binding site. Acetyl-CoA contacts are provided by residues 121-123 (LAV) and 129-134 (QQGRGP). Position 156 (methionine 156) interacts with substrate. 165 to 167 (YER) contributes to the acetyl-CoA binding site. Serine 202 carries the post-translational modification Phosphoserine.

This sequence belongs to the acetyltransferase family. AANAT subfamily. As to quaternary structure, monomer. Interacts with several 14-3-3 proteins, including YWHAB, YWHAE, YWHAG and YWHAZ, preferentially when phosphorylated at Thr-28. Phosphorylation on Ser-202 also allows binding to YWHAZ, but with lower affinity. The interaction with YWHAZ considerably increases affinity for arylalkylamines and acetyl-CoA and protects the enzyme from dephosphorylation and proteasomal degradation. It may also prevent thiol-dependent inactivation. CAMP-dependent phosphorylation regulates AANAT activity by promoting interaction with 14-3-3 proteins. Phosphorylation levels exhibit night/day variations, with an increase during nighttime. As to expression, highly expressed in pineal gland and in the photoreceptor outer segments in the retina. Expressed at about 100-fold lower levels in the pituitary gland and testis. Not detected in other tissues.

Its subcellular location is the cytoplasm. It carries out the reaction a 2-arylethylamine + acetyl-CoA = an N-acetyl-2-arylethylamine + CoA + H(+). It participates in aromatic compound metabolism; melatonin biosynthesis; melatonin from serotonin: step 1/2. Functionally, controls the night/day rhythm of melatonin production in the pineal gland. Catalyzes the N-acetylation of serotonin into N-acetylserotonin, the penultimate step in the synthesis of melatonin. The sequence is that of Serotonin N-acetyltransferase (AANAT) from Macaca mulatta (Rhesus macaque).